We begin with the raw amino-acid sequence, 254 residues long: Mediator of RNA polymerase II transcription subunit 4 (254 aa).

The stretch at 72–114 (RVHQEMQSLEKEVEKRDSDIQQLQKQLKEAEHILATAVYQAKE) forms a coiled coil. Positions 215-254 (ILPPHHGNDFGLEPPGHNKENEDDVEAMSTDSSSSSSDSD) are disordered. Low complexity predominate over residues 243–254 (STDSSSSSSDSD).

This sequence belongs to the Mediator complex subunit 4 family. As to quaternary structure, component of the Mediator complex.

It is found in the nucleus. Its function is as follows. Component of the Mediator complex, a coactivator involved in the regulated transcription of nearly all RNA polymerase II-dependent genes. Mediator functions as a bridge to convey information from gene-specific regulatory proteins to the basal RNA polymerase II transcription machinery. Mediator is recruited to promoters by direct interactions with regulatory proteins and serves as a scaffold for the assembly of a functional preinitiation complex with RNA polymerase II and the general transcription factors. This is Mediator of RNA polymerase II transcription subunit 4 (med4) from Danio rerio (Zebrafish).